The following is a 77-amino-acid chain: Cell division topological specificity factor (77 aa).

Belongs to the MinE family.

In terms of biological role, prevents the cell division inhibition by proteins MinC and MinD at internal division sites while permitting inhibition at polar sites. This ensures cell division at the proper site by restricting the formation of a division septum at the midpoint of the long axis of the cell. This Helicobacter pylori (strain P12) protein is Cell division topological specificity factor.